The chain runs to 289 residues: MPSLKDLKNRIGSVKNTRKITKAMQMVAAAKLRRAQEAAEAARPFAERMTAVMTGLAGSVGSSESAPRLLAGTGSDKVQLLVVMTAERGLCGGFNSSIVRLARAHAAKLLAEGKTVKILTVGKKGREQLRRDLGQHFIGHVDLSEVKRMGYPVAQGIARDVLDRFDKGEFDVATIFFARFQSVISQIPTAQQVIPAVFEGEGEVNSLYDYEPSEEGVLADLLPRGVATQIFTALLENGASEQGARMSAMDNATRNAGDMINRLTIQYNRSRQAAITKELIEIISGAEAL.

This sequence belongs to the ATPase gamma chain family. In terms of assembly, F-type ATPases have 2 components, CF(1) - the catalytic core - and CF(0) - the membrane proton channel. CF(1) has five subunits: alpha(3), beta(3), gamma(1), delta(1), epsilon(1). CF(0) has three main subunits: a, b and c.

The protein resides in the cell inner membrane. Functionally, produces ATP from ADP in the presence of a proton gradient across the membrane. The gamma chain is believed to be important in regulating ATPase activity and the flow of protons through the CF(0) complex. The sequence is that of ATP synthase gamma chain from Cereibacter sphaeroides (strain ATCC 17025 / ATH 2.4.3) (Rhodobacter sphaeroides).